The sequence spans 569 residues: Glutamate--tRNA ligase, chloroplastic/mitochondrial (569 aa).

59-61 lines the L-glutamate pocket; the sequence is RFA. The 'HIGH' region signature appears at 62 to 72; the sequence is PSPTGNLHVGG. Residue H69 participates in ATP binding. Residues E95, 247-251, and R265 contribute to the L-glutamate site; that span reads YNFCV. ATP contacts are provided by residues E268 and 303-307; that span reads KLSKR. The 'KMSKS' region signature appears at 303–307; it reads KLSKR.

Belongs to the class-I aminoacyl-tRNA synthetase family. Glutamate--tRNA ligase type 1 subfamily.

It localises to the plastid. It is found in the chloroplast. The protein localises to the mitochondrion. The enzyme catalyses tRNA(Glu) + L-glutamate + ATP = L-glutamyl-tRNA(Glu) + AMP + diphosphate. Catalyzes the attachment of glutamate to tRNA(Glu) in a two-step reaction: glutamate is first activated by ATP to form Glu-AMP and then transferred to the acceptor end of tRNA(Glu). The chain is Glutamate--tRNA ligase, chloroplastic/mitochondrial from Nicotiana tabacum (Common tobacco).